A 305-amino-acid polypeptide reads, in one-letter code: Putative ankyrin repeat protein RF_0580 (305 aa).

7 ANK repeats span residues 5-34 (YNKN…NIDE), 39-68 (RGET…SPNI), 72-101 (SGQT…NIDL), 107-136 (CGHS…DINS), 140-169 (FGAS…DVNA), 173-202 (YEDT…DVNI), and 206-235 (NNFT…TIKI).

In Rickettsia felis (strain ATCC VR-1525 / URRWXCal2) (Rickettsia azadi), this protein is Putative ankyrin repeat protein RF_0580.